The chain runs to 75 residues: Lividin-3 (75 aa).

Positions 1-22 (MFTLKKSLLLLFFLGTISLSLC) are cleaved as a signal peptide. A propeptide spanning residues 23–40 (EEERDADEDEGEMTEEEV) is cleaved from the precursor. An intrachain disulfide couples Cys-69 to Cys-75.

As to expression, expressed by the skin glands.

It localises to the secreted. In terms of biological role, antimicrobial peptide. The protein is Lividin-3 of Odorrana livida (Green mountain frog).